We begin with the raw amino-acid sequence, 82 residues long: Sulfur carrier protein TusA (82 aa).

Cys19 functions as the Cysteine persulfide intermediate in the catalytic mechanism.

The protein belongs to the sulfur carrier protein TusA family.

It is found in the cytoplasm. Sulfur carrier protein which probably makes part of a sulfur-relay system. The sequence is that of Sulfur carrier protein TusA from Vibrio parahaemolyticus serotype O3:K6 (strain RIMD 2210633).